The following is a 432-amino-acid chain: MSDKLPYKVADIGLAAWGRKALDIAENEMPGLMRMRERYSASKPLKGARIAGCLHMTVETAVLIETLVTLGAEVQWSSCNIFSTQDHAAAAIAKAGIPVYAWKGETDEEYLWCIEQTLYFKDGPLNMILDDGGDLTNLIHTKYPQLLPGIRGISEETTTGVHNLYKMMANGILKVPAINVNDSVTKSKFDNLYGCRESLIDGIKRATDVMIAGKVAVVAGYGDVGKGCAQALRGFGARVIITEIDPINALQAAMEGYEVTTMDEACQEGNIFVTTTGCIDIILGRHFEQMKDDAIVCNIGHFDVEIDVKWLNENAVEKVNIKPQVDRYRLKNGRRIILLAEGRLVNLGCAMGHPSFVMSNSFTNQVMAQIELWTHPDKYPVGVHFLPKKLDEAVAEAHLGKLNVKLTKLTEKQAQYLGMSCDGPFKPDHYRY.

Ser2 is subject to N-acetylserine. The substrate site is built by Thr57, Asp131, and Glu156. 157 to 159 (TTT) contributes to the NAD(+) binding site. Phosphoserine is present on Ser183. Residues Lys186 and Asp190 each contribute to the substrate site. Lys186 is modified (N6-(2-hydroxyisobutyryl)lysine). Tyr193 is subject to Phosphotyrosine. NAD(+)-binding positions include 222 to 227 (GDVGKG), Glu243, Asn248, 299 to 301 (IGH), Asn346, and His353.

Belongs to the adenosylhomocysteinase family. Homotetramer. Interaction with AHCYL1. NAD(+) is required as a cofactor.

The protein resides in the cytoplasm. The protein localises to the melanosome. It is found in the nucleus. Its subcellular location is the endoplasmic reticulum. It carries out the reaction S-adenosyl-L-homocysteine + H2O = L-homocysteine + adenosine. The protein operates within amino-acid biosynthesis; L-homocysteine biosynthesis; L-homocysteine from S-adenosyl-L-homocysteine: step 1/1. Its function is as follows. Catalyzes the hydrolysis of S-adenosyl-L-homocysteine to form adenosine and homocysteine. Binds copper ions. The chain is Adenosylhomocysteinase (AHCY) from Homo sapiens (Human).